We begin with the raw amino-acid sequence, 327 residues long: Phage tubulin-like protein (327 aa).

Residues 14 to 15 (GA) and 107 to 109 (ASG) each bind GTP. Positions 303 to 327 (KANMRKRQSTLDVDDQATSSGLVFD) are disordered. Polar residues predominate over residues 318-327 (QATSSGLVFD).

This sequence belongs to the FtsZ family. PhuZ subfamily. As to quaternary structure, homomultimer. Polymerizes in a strictly GTP-dependent manner.

The protein localises to the host cytoplasm. It carries out the reaction GTP + H2O = GDP + phosphate + H(+). With respect to regulation, the non-hydrolyzable GTP analog GMPCPP stabilizes filaments, which never disassemble. In terms of biological role, a tubulin-like GTPase that forms filaments, which are required for positioning viral DNA and capsids in the middle of the host cell for optimal replication. The motor component of a partition system which pushes phage DNA (encased by protein gp105) to the center of the bacterial host cell. Also required for movement of phage capsids to the vicinity of the viral DNA and rotation of the encased viral DNA at midcell. Forms filaments during the lytic phase, which position phage DNA at the center of the bacterial host cell. Filaments have a three-stranded intertwined architecture and form a spindle-like cytoskeleton within the infected cell. Has GTPase activity. Filaments grow at the plus end and depolymerize at the minus end, a process called treadmilling, and switch from growing in a polar manner to catastrophic depolymerization, i.e. they display dynamic instability, like tubulin. In infected host cells the filament ends close to the cell pole are relatively stable, while the other end near the phage DNA is highly dynamic. Both capsid movement and DNA rotation probably require treadmilling. This chain is Phage tubulin-like protein, found in Pseudomonas phage phiKZ.